A 73-amino-acid chain; its full sequence is Copper chaperone ATX1 (73 aa).

In terms of domain architecture, HMA spans 4–68 (IKHYQFNVVM…KIKKTGKEVR (65 aa)). Cu(+) is bound by residues Cys15 and Cys18.

This sequence belongs to the ATX1 family. As to quaternary structure, homodimer. Interacts with CCC2 via the copper anion.

The protein localises to the cytoplasm. With respect to regulation, tetrathiomolybdate directly and reversibly down-regulates copper delivery to secreted metalloenzymes. Its function is as follows. Copper homeostasis factor that specifically transports copper to the secretory pathway for incorporation into copper enzymes destined for the cell surface or extracellular milieu. Shuttles copper to the transport ATPase CCC2 on a post-Golgi vesicle for eventual targeting to the cell-surface high-affinity iron uptake protein FET3. Protects against oxygen toxicity. The protein is Copper chaperone ATX1 of Saccharomyces cerevisiae (strain ATCC 204508 / S288c) (Baker's yeast).